Here is a 495-residue protein sequence, read N- to C-terminus: Tripartite motif-containing protein 5 (495 aa).

At alanine 2 the chain carries N-acetylalanine. Residues 15 to 60 (CPICLELLTEPLSLHCGHSFCQACITANHKKSMLYKEGERSCPVCR) form an RING-type zinc finger. A Phosphoserine modification is found at serine 87. The B box-type zinc-finger motif lies at 92–133 (QKVDHCARHGEKLLLFCQEDSKVICWLCERSQEHRGHHTFLM). Residues cysteine 97, histidine 100, cysteine 119, and histidine 125 each contribute to the Zn(2+) site. A coiled-coil region spans residues 137–223 (AQEYHVKLQT…KSLTKSETKM (87 aa)). Residues 187-200 (FEQLREILDREESN) form a required for interaction with GABARAP and for autophagy region. The B30.2/SPRY domain maps to 283 to 495 (LKGMLDMFRE…VPMTLCSPSS (213 aa)).

The protein belongs to the TRIM/RBCC family. Can form homodimers and homotrimers. In addition to lower-order dimerization, also exhibits a higher-order multimerization and both low- and high-order multimerizations are essential for its restriction activity. Interacts with BTBD1 and BTBD2. Interacts with PSMC4, PSMC5, PSMD7 and HSPA8/HSC70. Interacts (via B30.2/SPRY domain) with HSPA1A/B. Interacts with PSMC2, MAP3K7/TAK1, TAB2 and TAB3. Interacts with SQSTM1. Interacts with TRIM6 and TRIM34. Interacts with ULK1 (phosphorylated form), GABARAP, GABARAPL1, GABARAPL2, MAP1LC3A, MAP1LC3C and BECN1. In terms of processing, degraded in a proteasome-independent fashion in the absence of viral infection but in a proteasome-dependent fashion following exposure to restriction sensitive virus. Post-translationally, autoubiquitinated in a RING finger- and UBE2D2-dependent manner. Monoubiquitinated by TRIM21. Deubiquitinated by Yersinia YopJ. Ubiquitination may not lead to proteasomal degradation.

Its subcellular location is the cytoplasm. It is found in the nucleus. It catalyses the reaction S-ubiquitinyl-[E2 ubiquitin-conjugating enzyme]-L-cysteine + [acceptor protein]-L-lysine = [E2 ubiquitin-conjugating enzyme]-L-cysteine + N(6)-ubiquitinyl-[acceptor protein]-L-lysine.. The protein operates within protein modification; protein ubiquitination. In terms of biological role, capsid-specific restriction factor that prevents infection from non-host-adapted retroviruses. Blocks viral replication early in the life cycle, after viral entry but before reverse transcription. In addition to acting as a capsid-specific restriction factor, also acts as a pattern recognition receptor that activates innate immune signaling in response to the retroviral capsid lattice. Binding to the viral capsid triggers its E3 ubiquitin ligase activity, and in concert with the heterodimeric ubiquitin conjugating enzyme complex UBE2V1-UBE2N (also known as UBC13-UEV1A complex) generates 'Lys-63'-linked polyubiquitin chains, which in turn are catalysts in the autophosphorylation of the MAP3K7/TAK1 complex (includes TAK1, TAB2, and TAB3). Activation of the MAP3K7/TAK1 complex by autophosphorylation results in the induction and expression of NF-kappa-B and MAPK-responsive inflammatory genes, thereby leading to an innate immune response in the infected cell. Plays a role in regulating autophagy through activation of autophagy regulator BECN1 by causing its dissociation from its inhibitors BCL2 and TAB2. This Macaca nemestrina (Pig-tailed macaque) protein is Tripartite motif-containing protein 5 (TRIM5).